Consider the following 637-residue polypeptide: tRNA 5-methylaminomethyl-2-thiouridine biosynthesis bifunctional protein MnmC (637 aa).

Positions 1–231 (MPIDPARLAF…KRQMCRGRHR (231 aa)) are tRNA (mnm(5)s(2)U34)-methyltransferase. The segment at 250-637 (IGAGLAGSST…RPARGMTREG (388 aa)) is FAD-dependent cmnm(5)s(2)U34 oxidoreductase.

This sequence in the N-terminal section; belongs to the methyltransferase superfamily. tRNA (mnm(5)s(2)U34)-methyltransferase family. The protein in the C-terminal section; belongs to the DAO family. It depends on FAD as a cofactor.

Its subcellular location is the cytoplasm. The catalysed reaction is 5-aminomethyl-2-thiouridine(34) in tRNA + S-adenosyl-L-methionine = 5-methylaminomethyl-2-thiouridine(34) in tRNA + S-adenosyl-L-homocysteine + H(+). Catalyzes the last two steps in the biosynthesis of 5-methylaminomethyl-2-thiouridine (mnm(5)s(2)U) at the wobble position (U34) in tRNA. Catalyzes the FAD-dependent demodification of cmnm(5)s(2)U34 to nm(5)s(2)U34, followed by the transfer of a methyl group from S-adenosyl-L-methionine to nm(5)s(2)U34, to form mnm(5)s(2)U34. The polypeptide is tRNA 5-methylaminomethyl-2-thiouridine biosynthesis bifunctional protein MnmC (Aromatoleum aromaticum (strain DSM 19018 / LMG 30748 / EbN1) (Azoarcus sp. (strain EbN1))).